The following is a 426-amino-acid chain: Histone deacetylase 9 (426 aa).

The interval 6–318 (KISYFYDGDV…WTVETGILLD (313 aa)) is histone deacetylase. Histidine 137 serves as the catalytic Proton donor/acceptor. Zn(2+)-binding residues include aspartate 172, histidine 174, and aspartate 261. Residues 383–426 (PDFYIPDFDEDEQNPDVRADQRSRDKQIQRDDEYFDGDNDNDAS) are disordered. Positions 397 to 414 (PDVRADQRSRDKQIQRDD) are enriched in basic and acidic residues. A compositionally biased stretch (acidic residues) spans 415–426 (EYFDGDNDNDAS).

This sequence belongs to the histone deacetylase family. HD type 1 subfamily. Interacts with AHL22. Binds to farnesylated ASG2 in the cytosol. Requires Zn(2+) as cofactor.

Its subcellular location is the nucleus. The protein resides in the cytoplasm. The protein localises to the cytosol. It catalyses the reaction N(6)-acetyl-L-lysyl-[histone] + H2O = L-lysyl-[histone] + acetate. Functionally, responsible for the deacetylation of lysine residues on the N-terminal part of the core histones (H2A, H2B, H3 and H4). Histone deacetylation gives a tag for epigenetic repression and plays an important role in transcriptional regulation, cell cycle progression and developmental events. Histone deacetylases act via the formation of large multiprotein complexes. This chain is Histone deacetylase 9 (HDA9), found in Arabidopsis thaliana (Mouse-ear cress).